The primary structure comprises 697 residues: Potassium-transporting ATPase ATP-binding subunit (697 aa).

4 helical membrane passes run 55 to 75, 79 to 99, 245 to 265, and 271 to 291; these read PIMF…FLPS, SIPG…VLFA, LTLI…YLGF, and VLVA…LSAI. Asp-324 serves as the catalytic 4-aspartylphosphate intermediate. ATP contacts are provided by residues Asp-361, Glu-365, 393 to 400, and Lys-412; that span reads FKAETRMS. Mg(2+) is bound by residues Asp-535 and Asp-539. 3 helical membrane passes run 605 to 625, 633 to 653, and 677 to 697; these read FAII…LNIM, AILS…PLAM, and GGVI…GLFI.

It belongs to the cation transport ATPase (P-type) (TC 3.A.3) family. Type IA subfamily. As to quaternary structure, the system is composed of three essential subunits: KdpA, KdpB and KdpC.

The protein resides in the cell membrane. The enzyme catalyses K(+)(out) + ATP + H2O = K(+)(in) + ADP + phosphate + H(+). Part of the high-affinity ATP-driven potassium transport (or Kdp) system, which catalyzes the hydrolysis of ATP coupled with the electrogenic transport of potassium into the cytoplasm. This subunit is responsible for energy coupling to the transport system and for the release of the potassium ions to the cytoplasm. The sequence is that of Potassium-transporting ATPase ATP-binding subunit from Bacillus cereus (strain ATCC 14579 / DSM 31 / CCUG 7414 / JCM 2152 / NBRC 15305 / NCIMB 9373 / NCTC 2599 / NRRL B-3711).